Here is a 196-residue protein sequence, read N- to C-terminus: ATP-dependent Clp protease proteolytic subunit (196 aa).

The active-site Nucleophile is the Ser99. Residue His124 is part of the active site.

Belongs to the peptidase S14 family. As to quaternary structure, fourteen ClpP subunits assemble into 2 heptameric rings which stack back to back to give a disk-like structure with a central cavity, resembling the structure of eukaryotic proteasomes.

The protein resides in the cytoplasm. It catalyses the reaction Hydrolysis of proteins to small peptides in the presence of ATP and magnesium. alpha-casein is the usual test substrate. In the absence of ATP, only oligopeptides shorter than five residues are hydrolyzed (such as succinyl-Leu-Tyr-|-NHMec, and Leu-Tyr-Leu-|-Tyr-Trp, in which cleavage of the -Tyr-|-Leu- and -Tyr-|-Trp bonds also occurs).. Functionally, cleaves peptides in various proteins in a process that requires ATP hydrolysis. Has a chymotrypsin-like activity. Plays a major role in the degradation of misfolded proteins. The protein is ATP-dependent Clp protease proteolytic subunit of Campylobacter lari (strain RM2100 / D67 / ATCC BAA-1060).